The following is a 727-amino-acid chain: E3 ubiquitin-protein ligase LRSAM1 (727 aa).

6 LRR repeats span residues 30 to 51, 56 to 77, 82 to 103, 105 to 126, 128 to 150, and 151 to 172; these read ADDI…AFAT, QKKV…SCSL, TIKV…MGQL, VLQV…IGNL, QLQT…GELR, and SLRT…LAHV. Positions 227–248 are disordered; that stretch reads GAENTQDSPDGPASRFSREEAE. Position 234 is a phosphoserine (S234). Coiled coils occupy residues 241-382 and 469-547; these read RFSR…NLRQ and RQIR…QENY. An SAM domain is found at 569–632; that stretch reads GMERRLVALL…LRRAQDLLAV (64 aa). S604 carries the phosphoserine modification. Short sequence motifs (PTAP motif) lie at residues 653 to 656 and 665 to 668; these read PTAP and PSAP. The segment at 679–714 adopts an RING-type zinc-finger fold; the sequence is CVVCLEREAQMVFLTCGHVCCCQQCCQPLRTCPLCR.

In terms of assembly, interacts with TSG101. Interacts with PHF23. Interacts with FUS. Ubiquitination promoted by PHF23 leads to proteasomal degradation. Widely expressed.

Its subcellular location is the cytoplasm. The enzyme catalyses S-ubiquitinyl-[E2 ubiquitin-conjugating enzyme]-L-cysteine + [acceptor protein]-L-lysine = [E2 ubiquitin-conjugating enzyme]-L-cysteine + N(6)-ubiquitinyl-[acceptor protein]-L-lysine.. Its pathway is protein modification; protein ubiquitination. Its function is as follows. E3 ubiquitin-protein ligase that mediates monoubiquitination of TSG101 at multiple sites, leading to inactivate the ability of TSG101 to sort endocytic (EGF receptors) and exocytic (viral proteins) cargos. Bacterial recognition protein that defends the cytoplasm from invasive pathogens. Localizes to several intracellular bacterial pathogens and generates the bacteria-associated ubiquitin signal leading to autophagy-mediated intracellular bacteria degradation (xenophagy). The sequence is that of E3 ubiquitin-protein ligase LRSAM1 from Mus musculus (Mouse).